The primary structure comprises 500 residues: Aldehyde dehydrogenase, mitochondrial (500 aa).

N6-acetyllysine is present on residues K35, K56, K61, and K142. Residue 245–250 (GSTEVG) participates in NAD(+) binding. Residue E268 is the Proton acceptor of the active site. C302 functions as the Nucleophile in the catalytic mechanism. An N6-acetyllysine mark is found at K351, K358, K366, K390, K409, K411, K424, and K434.

Belongs to the aldehyde dehydrogenase family. As to quaternary structure, homotetramer. In terms of processing, in response to mitochondrial stress, the precursor protein is ubiquitinated by the SIFI complex in the cytoplasm before mitochondrial import, leading to its degradation. Within the SIFI complex, UBR4 initiates ubiquitin chain that are further elongated or branched by KCMF1.

The protein resides in the mitochondrion matrix. The catalysed reaction is an aldehyde + NAD(+) + H2O = a carboxylate + NADH + 2 H(+). Its pathway is alcohol metabolism; ethanol degradation; acetate from ethanol: step 2/2. Functionally, required for clearance of cellular formaldehyde, a cytotoxic and carcinogenic metabolite that induces DNA damage. This chain is Aldehyde dehydrogenase, mitochondrial (ALDH2), found in Mesocricetus auratus (Golden hamster).